A 259-amino-acid chain; its full sequence is Tryptophan synthase alpha chain (259 aa).

Residues glutamate 35 and aspartate 46 each act as proton acceptor in the active site.

Belongs to the TrpA family. As to quaternary structure, tetramer of two alpha and two beta chains.

It carries out the reaction (1S,2R)-1-C-(indol-3-yl)glycerol 3-phosphate + L-serine = D-glyceraldehyde 3-phosphate + L-tryptophan + H2O. It functions in the pathway amino-acid biosynthesis; L-tryptophan biosynthesis; L-tryptophan from chorismate: step 5/5. In terms of biological role, the alpha subunit is responsible for the aldol cleavage of indoleglycerol phosphate to indole and glyceraldehyde 3-phosphate. In Methanococcus maripaludis (strain C7 / ATCC BAA-1331), this protein is Tryptophan synthase alpha chain.